The chain runs to 338 residues: Ketol-acid reductoisomerase (NADP(+)) (338 aa).

A KARI N-terminal Rossmann domain is found at 1-181 (MKVFYDKDCD…GGGRTGIIET (181 aa)). Residues 24-27 (YGSQ), Arg-47, Ser-50, Thr-52, and 82-85 (DEFQ) contribute to the NADP(+) site. His-107 is an active-site residue. Residue Gly-133 participates in NADP(+) binding. The region spanning 182 to 327 (TFKDETETDL…EQLRSMMPWI (146 aa)) is the KARI C-terminal knotted domain. Mg(2+) contacts are provided by Asp-190, Glu-194, Glu-226, and Glu-230. Ser-251 contacts substrate.

This sequence belongs to the ketol-acid reductoisomerase family. Requires Mg(2+) as cofactor.

It carries out the reaction (2R)-2,3-dihydroxy-3-methylbutanoate + NADP(+) = (2S)-2-acetolactate + NADPH + H(+). The catalysed reaction is (2R,3R)-2,3-dihydroxy-3-methylpentanoate + NADP(+) = (S)-2-ethyl-2-hydroxy-3-oxobutanoate + NADPH + H(+). It functions in the pathway amino-acid biosynthesis; L-isoleucine biosynthesis; L-isoleucine from 2-oxobutanoate: step 2/4. Its pathway is amino-acid biosynthesis; L-valine biosynthesis; L-valine from pyruvate: step 2/4. Involved in the biosynthesis of branched-chain amino acids (BCAA). Catalyzes an alkyl-migration followed by a ketol-acid reduction of (S)-2-acetolactate (S2AL) to yield (R)-2,3-dihydroxy-isovalerate. In the isomerase reaction, S2AL is rearranged via a Mg-dependent methyl migration to produce 3-hydroxy-3-methyl-2-ketobutyrate (HMKB). In the reductase reaction, this 2-ketoacid undergoes a metal-dependent reduction by NADPH to yield (R)-2,3-dihydroxy-isovalerate. The protein is Ketol-acid reductoisomerase (NADP(+)) of Pseudomonas putida (strain ATCC 700007 / DSM 6899 / JCM 31910 / BCRC 17059 / LMG 24140 / F1).